We begin with the raw amino-acid sequence, 878 residues long: Phosphoenolpyruvate carboxylase (878 aa).

Residues H137 and K545 contribute to the active site.

This sequence belongs to the PEPCase type 1 family. Mg(2+) is required as a cofactor.

The enzyme catalyses oxaloacetate + phosphate = phosphoenolpyruvate + hydrogencarbonate. Functionally, forms oxaloacetate, a four-carbon dicarboxylic acid source for the tricarboxylic acid cycle. The chain is Phosphoenolpyruvate carboxylase from Photorhabdus laumondii subsp. laumondii (strain DSM 15139 / CIP 105565 / TT01) (Photorhabdus luminescens subsp. laumondii).